Here is a 559-residue protein sequence, read N- to C-terminus: Nicotinate phosphoribosyltransferase 1 (559 aa).

Positions 33 and 221 each coordinate nicotinate. The residue at position 224 (histidine 224) is a Phosphohistidine. Arginine 331 is a binding site for nicotinate. Threonine 393 serves as a coordination point for 5-phospho-alpha-D-ribose 1-diphosphate.

Belongs to the NAPRTase family. Mg(2+) is required as a cofactor. Requires Mn(2+) as cofactor. Transiently phosphorylated on a His residue during the reaction cycle. Phosphorylation strongly increases the affinity for substrates and increases the rate of nicotinate D-ribonucleotide production. Dephosphorylation regenerates the low-affinity form of the enzyme, leading to product release.

It catalyses the reaction nicotinate + 5-phospho-alpha-D-ribose 1-diphosphate + ATP + H2O = nicotinate beta-D-ribonucleotide + ADP + phosphate + diphosphate. It participates in cofactor biosynthesis; NAD(+) biosynthesis; nicotinate D-ribonucleotide from nicotinate: step 1/1. In terms of biological role, catalyzes the first step in the biosynthesis of NAD from nicotinic acid, the ATP-dependent synthesis of beta-nicotinate D-ribonucleotide from nicotinate and 5-phospho-D-ribose 1-phosphate. Helps prevent cellular oxidative stress via its role in NAD biosynthesis. In Arabidopsis thaliana (Mouse-ear cress), this protein is Nicotinate phosphoribosyltransferase 1.